The following is a 252-amino-acid chain: Phosphoribosyl-ATP pyrophosphatase (252 aa).

Belongs to the PRA-PH family.

It localises to the cytoplasm. It catalyses the reaction 1-(5-phospho-beta-D-ribosyl)-ATP + H2O = 1-(5-phospho-beta-D-ribosyl)-5'-AMP + diphosphate + H(+). Its pathway is amino-acid biosynthesis; L-histidine biosynthesis; L-histidine from 5-phospho-alpha-D-ribose 1-diphosphate: step 2/9. This chain is Phosphoribosyl-ATP pyrophosphatase, found in Magnetococcus marinus (strain ATCC BAA-1437 / JCM 17883 / MC-1).